We begin with the raw amino-acid sequence, 1185 residues long: 205 kDa microtubule-associated protein (1185 aa).

Over residues 146 to 159 (EPNQLPEQLQQQQQ) the composition is skewed to low complexity. Positions 146–196 (EPNQLPEQLQQQQQIESQGVHEDPRQEDEDEHSSVATTYGTSSLSENNSSP) are disordered. The segment covering 179–196 (SVATTYGTSSLSENNSSP) has biased composition (polar residues). Residues Ser354 and Ser448 each carry the phosphoserine modification. The residue at position 450 (Tyr450) is a Phosphotyrosine. A phosphoserine mark is found at Ser709, Ser710, and Ser712. Position 721 is a phosphothreonine (Thr721). Position 728 is a phosphoserine (Ser728). A microtubule-binding region spans residues 745–977 (TAADGQSISQ…ASTKVRPAAT (233 aa)). Residues 856 to 866 (SIATKTSTTSS) are compositionally biased toward low complexity. Disordered regions lie at residues 856–1035 (SIAT…TSTA) and 1054–1114 (SASL…SSPA). Polar residues-rich tracts occupy residues 867 to 881 (LTGN…NVGS) and 908 to 936 (TITN…STNA). Ser874 is subject to Phosphoserine. Residues 940–952 (ATSGTGSVASSTA) show a composition bias toward low complexity. The segment covering 989 to 999 (PRSTISSTTTV) has biased composition (polar residues). A compositionally biased stretch (low complexity) spans 1003-1015 (PSTSTPSFSTRSP). Composition is skewed to polar residues over residues 1016-1026 (NKQQSNGLGKN) and 1054-1066 (SASL…STSR). Phosphoserine is present on residues Ser1075 and Ser1086. Over residues 1100–1111 (LTPQSKDGTAKS) the composition is skewed to polar residues. Ser1121 carries the phosphoserine modification.

The protein localises to the cytoplasm. Its subcellular location is the cytoskeleton. The protein resides in the spindle. May play an important role in the regulation of microtubule assembly and interaction. In Drosophila melanogaster (Fruit fly), this protein is 205 kDa microtubule-associated protein (Map205).